We begin with the raw amino-acid sequence, 513 residues long: MISSDSRSSPGLARWAESYEAKCERRQETRENRRRRRNETTCRQPGKVLRTQHKERLQGARQLQFLKRRNLEEEKKGQAREQGPSSKTDGGTGQVSILKESLPGANKASFPGQQETGISSEVFPALHHSSSGIQRDLGGHHASHGRAFPPQDSDIKKPHRQHRGTQTKAEEALPTIKNDASQQTNCGVAVLDKDIIQLSEYLKEALHRELILKKKMVILQDLLPALIRASDSSWKGQLNEDKLKGKLRSLENQLYTCLQKHSPWGMKKVLLEMEDQRSSYEQKAKASLQKVLEEKMCAEQQLQRAQLSLALAEQKCQEWKSQYEALKEDWRTLGDQHRELESQLHVLQSKLQGADSRDSQMSQALQLLENEHQELQTKLESLQGDGEQQSSETQDLQDQLKKSEEEKQALVSKVQQLQSLLQNQSLQLQEQEKLLKKDQGLPVWNPKLSLDEVKPEGTRKEKEEELRDQLQKETFQLQVKENELQCGQWLPVLMVVIATALAVFLANKGNLVI.

Disordered regions lie at residues 1-96 (MISS…GQVS), 130-171 (SSGI…KAEE), and 381-402 (SLQGDGEQQSSETQDLQDQLKK). Over 1 to 485 (MISSDSRSSP…QLQVKENELQ (485 aa)) the chain is Cytoplasmic. Basic and acidic residues-rich tracts occupy residues 17 to 31 (ESYEAKCERRQETRE) and 69 to 79 (RNLEEEKKGQA). A coiled-coil region spans residues 266–488 (MKKVLLEMED…VKENELQCGQ (223 aa)). Polar residues predominate over residues 386-397 (GEQQSSETQDLQ). Residues 486-506 (CGQWLPVLMVVIATALAVFLA) traverse the membrane as a helical; Anchor for type IV membrane protein segment. The Extracellular portion of the chain corresponds to 507–513 (NKGNLVI).

Interacts (via its coiled-coil domain) with TRAF3 (via isoleucine zipper). Interacts with MAP2K1. Interacts with PPP2CA; this interaction targets PPP2CA to the lysosomes. Interacts with MAVS. Interacts with TBK1. In terms of tissue distribution, expressed in bone marrow, spleen and thymus. Not detected in heart, kidney and liver.

It is found in the cell membrane. The protein resides in the golgi apparatus membrane. The protein localises to the lysosome membrane. Its subcellular location is the mitochondrion outer membrane. Adapter protein that plays essential roles in both innate and adaptive immunity. Plays a crucial role in the regulation of thymocyte development. Mechanistically, mediates TCR-stimulated activation through recruiting MAP2K1/MEK1 to the Golgi and, thereby, facilitating the interaction of MAP2K1/MEK1 with its activator BRAF. Also plays an essential role in regulatory T-cell stability and function by recruiting the serine-threonine phosphatase catalytic subunit (PPP2CA) to the lysosome, thereby facilitating the interaction of PP2Ac with the mTORC1 component RPTOR and restricting glycolytic metabolism. Positively regulates TLR4 signaling activity in macrophage-mediated inflammation by acting as a molecular clamp to facilitate LPS-induced translocation of TLR4 to lipid rafts. In response to viral infection, facilitates the recruitment of TRAF3 to MAVS within mitochondria leading to IRF3 activation and interferon production. However, participates in the maintenance of immune homeostasis and the prevention of overzealous innate immunity by promoting 'Lys-48'-dependent ubiquitination of TBK1. In Mus musculus (Mouse), this protein is TRAF3-interacting JNK-activating modulator (Traf3ip3).